The sequence spans 109 residues: Nucleoid-associated protein Sbal223_1770 (109 aa).

Belongs to the YbaB/EbfC family. As to quaternary structure, homodimer.

Its subcellular location is the cytoplasm. It localises to the nucleoid. Functionally, binds to DNA and alters its conformation. May be involved in regulation of gene expression, nucleoid organization and DNA protection. The polypeptide is Nucleoid-associated protein Sbal223_1770 (Shewanella baltica (strain OS223)).